A 331-amino-acid chain; its full sequence is Tryptophan--tRNA ligase (331 aa).

Residues 10–12 (QPS) and 18–19 (GN) contribute to the ATP site. The short motif at 11–19 (PSGQLTLGN) is the 'HIGH' region element. L-tryptophan is bound at residue Asp-133. Residues 145–147 (GED), Val-184, and 193–197 (KMSKS) contribute to the ATP site. The 'KMSKS' region motif lies at 193–197 (KMSKS).

This sequence belongs to the class-I aminoacyl-tRNA synthetase family. Homodimer.

It is found in the cytoplasm. It carries out the reaction tRNA(Trp) + L-tryptophan + ATP = L-tryptophyl-tRNA(Trp) + AMP + diphosphate + H(+). Catalyzes the attachment of tryptophan to tRNA(Trp). The sequence is that of Tryptophan--tRNA ligase from Listeria monocytogenes serotype 4b (strain F2365).